The primary structure comprises 196 residues: GTP cyclohydrolase-2 (196 aa).

49–53 lines the GTP pocket; the sequence is RVHSE. Residues cysteine 54, cysteine 65, and cysteine 67 each coordinate Zn(2+). GTP is bound by residues glutamine 70, 92 to 94, and threonine 114; that span reads EGR. The Proton acceptor role is filled by aspartate 126. The active-site Nucleophile is the arginine 128. Threonine 149 and lysine 154 together coordinate GTP.

Belongs to the GTP cyclohydrolase II family. Homodimer. Requires Zn(2+) as cofactor.

The catalysed reaction is GTP + 4 H2O = 2,5-diamino-6-hydroxy-4-(5-phosphoribosylamino)-pyrimidine + formate + 2 phosphate + 3 H(+). Its pathway is cofactor biosynthesis; riboflavin biosynthesis; 5-amino-6-(D-ribitylamino)uracil from GTP: step 1/4. In terms of biological role, catalyzes the conversion of GTP to 2,5-diamino-6-ribosylamino-4(3H)-pyrimidinone 5'-phosphate (DARP), formate and pyrophosphate. The protein is GTP cyclohydrolase-2 of Salmonella choleraesuis (strain SC-B67).